Here is a 605-residue protein sequence, read N- to C-terminus: Heparan-sulfate 6-O-sulfotransferase 2 (605 aa).

The Cytoplasmic portion of the chain corresponds to 1–4 (MALP). Residues 1-66 (MALPACAVRE…GVSHGFHTRP (66 aa)) are disordered. Residues 5–27 (ACAVREFEPPRQPERGAPVRTTC) traverse the membrane as a helical; Signal-anchor for type II membrane protein segment. The span at 9–18 (REFEPPRQPE) shows a compositional bias: basic and acidic residues. Topologically, residues 28 to 605 (PRRHSRVEAE…DYIGSVEKWR (578 aa)) are lumenal. An N-linked (GlcNAc...) asparagine glycan is attached at asparagine 209. 233–241 (HIQKTGGTT) lines the 3'-phosphoadenylyl sulfate pocket. Substrate-binding positions include 263–264 (KK), arginine 280, tryptophan 285, and histidine 290. Residue histidine 290 is the Proton acceptor of the active site. Residues arginine 325 and serine 333 each coordinate 3'-phosphoadenylyl sulfate. 2 residues coordinate substrate: histidine 337 and tryptophan 344. A glycan (N-linked (GlcNAc...) asparagine) is linked at asparagine 404. 457 to 459 (TQY) is a 3'-phosphoadenylyl sulfate binding site. Asparagine 460 carries N-linked (GlcNAc...) asparagine glycosylation. 463-464 (RA) contributes to the 3'-phosphoadenylyl sulfate binding site. The segment at 530–605 (FQSQGQGQSQ…DYIGSVEKWR (76 aa)) is disordered. Residues 531–571 (QSQGQGQSQNPNQNQSQNPNPNANQNLTQNLMQNLTQSLSQ) are compositionally biased toward low complexity. 5 N-linked (GlcNAc...) asparagine glycosylation sites follow: asparagine 544, asparagine 556, asparagine 564, asparagine 589, and asparagine 592. Over residues 579–597 (KQNSGKEQNDNTSNGTNDY) the composition is skewed to polar residues.

This sequence belongs to the sulfotransferase 6 family.

The protein localises to the membrane. It carries out the reaction alpha-D-glucosaminyl-[heparan sulfate](n) + 3'-phosphoadenylyl sulfate = 6-sulfo-alpha-D-glucosaminyl-[heparan sulfate](n) + adenosine 3',5'-bisphosphate + H(+). Functionally, 6-O-sulfation enzyme which catalyzes the transfer of sulfate from 3'-phosphoadenosine 5'-phosphosulfate (PAPS) to position 6 of the N-sulfoglucosamine residue (GlcNS) of heparan sulfate. The chain is Heparan-sulfate 6-O-sulfotransferase 2 from Homo sapiens (Human).